Here is a 428-residue protein sequence, read N- to C-terminus: 3-phosphoshikimate 1-carboxyvinyltransferase (428 aa).

Residues K22, S23, and R27 each coordinate 3-phosphoshikimate. Phosphoenolpyruvate is bound at residue K22. Phosphoenolpyruvate contacts are provided by G96 and R124. S169, S170, Q171, S197, D313, N336, and K340 together coordinate 3-phosphoshikimate. Residue Q171 participates in phosphoenolpyruvate binding. The active-site Proton acceptor is D313. Positions 344, 386, and 411 each coordinate phosphoenolpyruvate.

The protein belongs to the EPSP synthase family. In terms of assembly, monomer.

It localises to the cytoplasm. It carries out the reaction 3-phosphoshikimate + phosphoenolpyruvate = 5-O-(1-carboxyvinyl)-3-phosphoshikimate + phosphate. The protein operates within metabolic intermediate biosynthesis; chorismate biosynthesis; chorismate from D-erythrose 4-phosphate and phosphoenolpyruvate: step 6/7. Functionally, catalyzes the transfer of the enolpyruvyl moiety of phosphoenolpyruvate (PEP) to the 5-hydroxyl of shikimate-3-phosphate (S3P) to produce enolpyruvyl shikimate-3-phosphate and inorganic phosphate. The protein is 3-phosphoshikimate 1-carboxyvinyltransferase of Photorhabdus laumondii subsp. laumondii (strain DSM 15139 / CIP 105565 / TT01) (Photorhabdus luminescens subsp. laumondii).